Reading from the N-terminus, the 267-residue chain is Ribosomal RNA small subunit methyltransferase A (267 aa).

N16, L18, G43, E64, D88, and N109 together coordinate S-adenosyl-L-methionine.

Belongs to the class I-like SAM-binding methyltransferase superfamily. rRNA adenine N(6)-methyltransferase family. RsmA subfamily.

The protein resides in the cytoplasm. It carries out the reaction adenosine(1518)/adenosine(1519) in 16S rRNA + 4 S-adenosyl-L-methionine = N(6)-dimethyladenosine(1518)/N(6)-dimethyladenosine(1519) in 16S rRNA + 4 S-adenosyl-L-homocysteine + 4 H(+). Its function is as follows. Specifically dimethylates two adjacent adenosines (A1518 and A1519) in the loop of a conserved hairpin near the 3'-end of 16S rRNA in the 30S particle. May play a critical role in biogenesis of 30S subunits. This is Ribosomal RNA small subunit methyltransferase A from Acidithiobacillus ferrooxidans (strain ATCC 23270 / DSM 14882 / CIP 104768 / NCIMB 8455) (Ferrobacillus ferrooxidans (strain ATCC 23270)).